The primary structure comprises 450 residues: tRNA-2-methylthio-N(6)-dimethylallyladenosine synthase (450 aa).

Residues 14-132 (GEFFIETWGC…FPNYLNEVKK (119 aa)) enclose the MTTase N-terminal domain. 6 residues coordinate [4Fe-4S] cluster: Cys23, Cys59, Cys93, Cys169, Cys173, and Cys176. Residues 155 to 385 (RKNSMKAFVT…VEVVNEISAK (231 aa)) form the Radical SAM core domain. The 63-residue stretch at 388-450 (KAYEGKIEEV…NSFSLTGEEI (63 aa)) folds into the TRAM domain.

Belongs to the methylthiotransferase family. MiaB subfamily. Monomer. [4Fe-4S] cluster is required as a cofactor.

It is found in the cytoplasm. The enzyme catalyses N(6)-dimethylallyladenosine(37) in tRNA + (sulfur carrier)-SH + AH2 + 2 S-adenosyl-L-methionine = 2-methylsulfanyl-N(6)-dimethylallyladenosine(37) in tRNA + (sulfur carrier)-H + 5'-deoxyadenosine + L-methionine + A + S-adenosyl-L-homocysteine + 2 H(+). Catalyzes the methylthiolation of N6-(dimethylallyl)adenosine (i(6)A), leading to the formation of 2-methylthio-N6-(dimethylallyl)adenosine (ms(2)i(6)A) at position 37 in tRNAs that read codons beginning with uridine. This is tRNA-2-methylthio-N(6)-dimethylallyladenosine synthase from Clostridium botulinum (strain Okra / Type B1).